A 283-amino-acid chain; its full sequence is Bifunctional protein FolD (283 aa).

Residues 165–167 (GRS), S190, and V231 each bind NADP(+).

This sequence belongs to the tetrahydrofolate dehydrogenase/cyclohydrolase family. In terms of assembly, homodimer. Interacts with BrxC.

The catalysed reaction is (6R)-5,10-methylene-5,6,7,8-tetrahydrofolate + NADP(+) = (6R)-5,10-methenyltetrahydrofolate + NADPH. It carries out the reaction (6R)-5,10-methenyltetrahydrofolate + H2O = (6R)-10-formyltetrahydrofolate + H(+). It functions in the pathway one-carbon metabolism; tetrahydrofolate interconversion. In terms of biological role, catalyzes the oxidation of 5,10-methylenetetrahydrofolate to 5,10-methenyltetrahydrofolate and then the hydrolysis of 5,10-methenyltetrahydrofolate to 10-formyltetrahydrofolate. This is Bifunctional protein FolD from Bacillus subtilis (strain 168).